The following is a 168-amino-acid chain: Desumoylating isopeptidase 1 (168 aa).

Residues 7 to 149 (YPVKLYVYDL…FGQALRPLLD (143 aa)) enclose the PPPDE domain. Residue His-38 is part of the active site. The short motif at 83-91 (IFLEYLSSL) is the Nuclear export signal 1 element. Residue Cys-108 is part of the active site. A Nuclear export signal 2 motif is present at residues 139 to 153 (PFGQALRPLLDSIQI).

This sequence belongs to the DeSI family. As to quaternary structure, homodimer. Interacts with UBQLN4; leading to the export of UBQLN4 from the nucleus.

Its subcellular location is the cytoplasm. The protein localises to the nucleus. It carries out the reaction S-hexadecanoyl-L-cysteinyl-[protein] + H2O = L-cysteinyl-[protein] + hexadecanoate + H(+). With respect to regulation, palmostatin B inhibits its palmitoyl protein thioesterase activity. Protease which deconjugates SUMO1, SUMO2 and SUMO3 from some substrate proteins. Has isopeptidase but not SUMO-processing activity. Desumoylates ZBTB46. Collaborates with UBQLN4 in the export of ubiquitinated proteins from the nucleus to the cytoplasm. Exhibits palmitoyl protein thioesterase (S-depalmitoylation) activity towards synthetic substrates 4-methylumbelliferyl-6-S-palmitoyl-beta-D-glucopyranoside and S-depalmitoylation probe 5 (DPP-5). The polypeptide is Desumoylating isopeptidase 1 (Homo sapiens (Human)).